We begin with the raw amino-acid sequence, 654 residues long: MGPTSPAARGQGRRWRPPPLPLLLPLSLLLLRAQLAVGNLAVGSPSAAEAPGSAQVAGLCGRLTLHRDLRTGRWEPDPQRSRRCLLDPQRVLEYCRQMYPELHIARVEQAAQAIPMERWCGGTRSGRCAHPHHEVVPFHCLPGEFVSEALLVPEGCRFLHQERMDQCESSTRRHQEAQEACSSQGLILHGSGMLLPCGSDRFRGVEYVCCPPPATPNPSGMAAGDPSTRSWPLGGRAEGGEDEEEVESFPQPVDDYFVEPPQAEEEEEEEEERAPPPSSHTPVMVSRVTPTPRPTDGVDVYFGMPGEIGEHEGFLRAKMDLEERRMRQINEVMREWAMADSQSKNLPKADRQALNEHFQSILQTLEEQVSGERQRLVETHATRVIALINDQRRAALEGFLAALQGDPPQAERVLMALRRYLRAEQKEQRHTLRHYQHVAAVDPEKAQQMRFQVQTHLQVIEERMNQSLGLLDQNPHLAQELRPQIQELLLAEHLGPSELDASVPGSSSEDKGSLQPPESKDDPPVTLPKGSTDQESSSSGREKLTPLEQYEQKVNASAPRGFPFHSSDIQRDELAPSGTGVSREALSGLLIMGAGGGSLIVLSLLLLRKKKPYGTISHGVVEVDPMLTLEEQQLRELQRHGYENPTYRFLEERP.

The N-terminal stretch at 1-38 (MGPTSPAARGQGRRWRPPPLPLLLPLSLLLLRAQLAVG) is a signal peptide. Residues 39–584 (NLAVGSPSAA…APSGTGVSRE (546 aa)) lie on the Extracellular side of the membrane. Residues 50–146 (APGSAQVAGL…PFHCLPGEFV (97 aa)) are GFLD subdomain. Positions 50–212 (APGSAQVAGL…RGVEYVCCPP (163 aa)) constitute an E1 domain. Cystine bridges form between cysteine 60–cysteine 84, cysteine 95–cysteine 140, cysteine 120–cysteine 128, cysteine 156–cysteine 210, cysteine 167–cysteine 197, and cysteine 181–cysteine 209. Positions 154–212 (EGCRFLHQERMDQCESSTRRHQEAQEACSSQGLILHGSGMLLPCGSDRFRGVEYVCCPP) are cuBD subdomain. A Cu(2+)-binding site is contributed by histidine 174. Zn(2+)-binding residues include glutamate 206, cysteine 209, and cysteine 210. The tract at residues 214 to 297 (ATPNPSGMAA…VTPTPRPTDG (84 aa)) is disordered. The segment covering 262–272 (QAEEEEEEEEE) has biased composition (acidic residues). Residues 297-488 (GVDVYFGMPG…QELRPQIQEL (192 aa)) form the E2 domain. 2 heparin-binding regions span residues 314-346 (FLRAKMDLEERRMRQINEVMREWAMADSQSKNL) and 414-445 (LMALRRYLRAEQKEQRHTLRHYQHVAAVDPEK). Residues 446–463 (AQQMRFQVQTHLQVIEER) form a collagen-binding region. A glycan (N-linked (GlcNAc...) asparagine) is linked at asparagine 465. The disordered stretch occupies residues 497 to 580 (SELDASVPGS…RDELAPSGTG (84 aa)). The segment covering 508-523 (SEDKGSLQPPESKDDP) has biased composition (basic and acidic residues). The span at 529-539 (KGSTDQESSSS) shows a compositional bias: polar residues. N-linked (GlcNAc...) asparagine glycosylation occurs at asparagine 555. A Cu(2+)-binding site is contributed by histidine 565. Histidine 565 is a Zn(2+) binding site. A helical membrane pass occupies residues 585–607 (ALSGLLIMGAGGGSLIVLSLLLL). Positions 608–619 (RKKKPYGTISHG) match the Basolateral sorting signal motif. Residues 608–654 (RKKKPYGTISHGVVEVDPMLTLEEQQLRELQRHGYENPTYRFLEERP) are Cytoplasmic-facing. The segment at 636 to 652 (ELQRHGYENPTYRFLEE) is interaction with DAB1. The segment at 640-654 (HGYENPTYRFLEERP) is interaction with DAB2. The short motif at 644–647 (NPTY) is the NPXY motif; contains endocytosis signal element.

Belongs to the APP family. As to quaternary structure, monomer and homodimer. Heparin binding promotes homodimerization. Binds, via its C-terminus, to the PID domain of several cytoplasmic proteins, including APBB and APBA family members, MAPK8IP1 and DAB1. Binding to Dab1 inhibits its serine phosphorylation. Interacts with CPEB1. Interacts (via NPXY motif) with DAB2 (via PID domain); the interaction is impaired by tyrosine phosphorylation of the NPXY motif. Interacts (via NPXY motif) with DAB1. Post-translationally, proteolytically cleaved by caspases during neuronal apoptosis. Cleaved, in vitro, at Asp-624 by caspase-3. N- and O-glycosylated.

The protein localises to the cell membrane. It is found in the cytoplasm. May play a role in postsynaptic function. The C-terminal gamma-secretase processed fragment, ALID1, activates transcription activation through APBB1 (Fe65) binding. Couples to JIP signal transduction through C-terminal binding. May interact with cellular G-protein signaling pathways. Can regulate neurite outgrowth through binding to components of the extracellular matrix such as heparin and collagen I. In terms of biological role, the gamma-CTF peptide, C30, is a potent enhancer of neuronal apoptosis. In Mus musculus (Mouse), this protein is Amyloid beta precursor like protein 1 (Aplp1).